The primary structure comprises 313 residues: Protein FixB (313 aa).

255–283 (LYLAVGISGQIQHMVGANASQTIFAINKD) serves as a coordination point for FAD.

This sequence belongs to the ETF alpha-subunit/FixB family. In terms of assembly, heterodimer of FixA and FixB.

It participates in amine and polyamine metabolism; carnitine metabolism. Its function is as follows. Required for anaerobic carnitine reduction. May bring reductant to CaiA. This Escherichia coli O157:H7 protein is Protein FixB.